Here is a 232-residue protein sequence, read N- to C-terminus: Urease accessory protein UreF (232 aa).

This sequence belongs to the UreF family. In terms of assembly, ureD, UreF and UreG form a complex that acts as a GTP-hydrolysis-dependent molecular chaperone, activating the urease apoprotein by helping to assemble the nickel containing metallocenter of UreC. The UreE protein probably delivers the nickel.

The protein resides in the cytoplasm. Its function is as follows. Required for maturation of urease via the functional incorporation of the urease nickel metallocenter. This chain is Urease accessory protein UreF, found in Trichodesmium erythraeum (strain IMS101).